Consider the following 108-residue polypeptide: Urease subunit gamma (108 aa).

The protein belongs to the urease gamma subunit family. As to quaternary structure, heterotrimer of UreA (gamma), UreB (beta) and UreC (alpha) subunits. Three heterotrimers associate to form the active enzyme.

It is found in the cytoplasm. It catalyses the reaction urea + 2 H2O + H(+) = hydrogencarbonate + 2 NH4(+). Its pathway is nitrogen metabolism; urea degradation; CO(2) and NH(3) from urea (urease route): step 1/1. The protein is Urease subunit gamma of Haloquadratum walsbyi (strain DSM 16790 / HBSQ001).